An 86-amino-acid chain; its full sequence is Large ribosomal subunit protein bL31B (86 aa).

The protein belongs to the bacterial ribosomal protein bL31 family. Type B subfamily. In terms of assembly, part of the 50S ribosomal subunit.

The sequence is that of Large ribosomal subunit protein bL31B from Erwinia tasmaniensis (strain DSM 17950 / CFBP 7177 / CIP 109463 / NCPPB 4357 / Et1/99).